The chain runs to 65 residues: Large ribosomal subunit protein bL35 (65 aa).

The protein belongs to the bacterial ribosomal protein bL35 family.

The chain is Large ribosomal subunit protein bL35 from Psychrobacter sp. (strain PRwf-1).